Reading from the N-terminus, the 87-residue chain is U3-theraphotoxin-Cg1b (87 aa).

Positions 1 to 23 (MRTLTLIAIVTCAALVIFHAAAA) are cleaved as a signal peptide. Positions 24–48 (EELEAQDVIQPEDIFTGVATLEEDR) are excised as a propeptide. 3 cysteine pairs are disulfide-bonded: Cys52–Cys65, Cys56–Cys79, and Cys73–Cys84.

The protein belongs to the neurotoxin 12 (Hwtx-2) family. 03 (juruin) subfamily. Expressed by the venom gland.

It localises to the secreted. Its function is as follows. Probable ion channel inhibitor. This chain is U3-theraphotoxin-Cg1b, found in Chilobrachys guangxiensis (Chinese earth tiger tarantula).